The sequence spans 504 residues: 26S proteasome non-ATPase regulatory subunit 3 (504 aa).

One can recognise a PCI domain in the interval 254–433 (ARYMYYQGRI…RDGPRYMQSS (180 aa)).

The protein belongs to the proteasome subunit S3 family. As to quaternary structure, the 26S proteasome is composed of a core protease, known as the 20S proteasome, capped at one or both ends by the 19S regulatory complex (RC). The RC is composed of at least 18 different subunits in two subcomplexes, the base and the lid, which form the portions proximal and distal to the 20S proteolytic core, respectively.

Functionally, acts as a regulatory subunit of the 26 proteasome which is involved in the ATP-dependent degradation of ubiquitinated proteins. The protein is 26S proteasome non-ATPase regulatory subunit 3 (rpn-3) of Caenorhabditis elegans.